Consider the following 363-residue polypeptide: NAD(P)H-quinone oxidoreductase subunit 1, chloroplastic (363 aa).

Helical transmembrane passes span 27 to 47 (IWLL…VLVI), 98 to 118 (FSIG…VIPF), 127 to 147 (LSIG…GLLM), 248 to 268 (YSGI…LVSS), 300 to 320 (VFGT…FLFI), and 336 to 356 (LLNL…LLTT).

It belongs to the complex I subunit 1 family. As to quaternary structure, NDH is composed of at least 16 different subunits, 5 of which are encoded in the nucleus.

It localises to the plastid. It is found in the chloroplast thylakoid membrane. The catalysed reaction is a plastoquinone + NADH + (n+1) H(+)(in) = a plastoquinol + NAD(+) + n H(+)(out). It carries out the reaction a plastoquinone + NADPH + (n+1) H(+)(in) = a plastoquinol + NADP(+) + n H(+)(out). Functionally, NDH shuttles electrons from NAD(P)H:plastoquinone, via FMN and iron-sulfur (Fe-S) centers, to quinones in the photosynthetic chain and possibly in a chloroplast respiratory chain. The immediate electron acceptor for the enzyme in this species is believed to be plastoquinone. Couples the redox reaction to proton translocation, and thus conserves the redox energy in a proton gradient. This chain is NAD(P)H-quinone oxidoreductase subunit 1, chloroplastic, found in Platanus occidentalis (Sycamore).